The primary structure comprises 473 residues: Protein nucleotidyltransferase YdiU (473 aa).

Residues Gly-79, Gly-81, Arg-82, Lys-102, Asp-114, Gly-115, Arg-165, and Arg-172 each contribute to the ATP site. Asp-241 (proton acceptor) is an active-site residue. Mg(2+) is bound by residues Asn-242 and Asp-251. ATP is bound at residue Asp-251.

The protein belongs to the SELO family. It depends on Mg(2+) as a cofactor. Mn(2+) serves as cofactor.

The enzyme catalyses L-seryl-[protein] + ATP = 3-O-(5'-adenylyl)-L-seryl-[protein] + diphosphate. The catalysed reaction is L-threonyl-[protein] + ATP = 3-O-(5'-adenylyl)-L-threonyl-[protein] + diphosphate. It catalyses the reaction L-tyrosyl-[protein] + ATP = O-(5'-adenylyl)-L-tyrosyl-[protein] + diphosphate. It carries out the reaction L-histidyl-[protein] + UTP = N(tele)-(5'-uridylyl)-L-histidyl-[protein] + diphosphate. The enzyme catalyses L-seryl-[protein] + UTP = O-(5'-uridylyl)-L-seryl-[protein] + diphosphate. The catalysed reaction is L-tyrosyl-[protein] + UTP = O-(5'-uridylyl)-L-tyrosyl-[protein] + diphosphate. In terms of biological role, nucleotidyltransferase involved in the post-translational modification of proteins. It can catalyze the addition of adenosine monophosphate (AMP) or uridine monophosphate (UMP) to a protein, resulting in modifications known as AMPylation and UMPylation. This Marinomonas sp. (strain MWYL1) protein is Protein nucleotidyltransferase YdiU.